A 156-amino-acid chain; its full sequence is 6,7-dimethyl-8-ribityllumazine synthase (156 aa).

Residues Phe22, Ala57–Glu59, and Ser81–Ile83 each bind 5-amino-6-(D-ribitylamino)uracil. (2S)-2-hydroxy-3-oxobutyl phosphate is bound at residue Gly86–Thr87. His89 functions as the Proton donor in the catalytic mechanism. A 5-amino-6-(D-ribitylamino)uracil-binding site is contributed by Phe114. A (2S)-2-hydroxy-3-oxobutyl phosphate-binding site is contributed by Arg128.

This sequence belongs to the DMRL synthase family. Forms an icosahedral capsid composed of 60 subunits, arranged as a dodecamer of pentamers.

It carries out the reaction (2S)-2-hydroxy-3-oxobutyl phosphate + 5-amino-6-(D-ribitylamino)uracil = 6,7-dimethyl-8-(1-D-ribityl)lumazine + phosphate + 2 H2O + H(+). It participates in cofactor biosynthesis; riboflavin biosynthesis; riboflavin from 2-hydroxy-3-oxobutyl phosphate and 5-amino-6-(D-ribitylamino)uracil: step 1/2. Its function is as follows. Catalyzes the formation of 6,7-dimethyl-8-ribityllumazine by condensation of 5-amino-6-(D-ribitylamino)uracil with 3,4-dihydroxy-2-butanone 4-phosphate. This is the penultimate step in the biosynthesis of riboflavin. The sequence is that of 6,7-dimethyl-8-ribityllumazine synthase from Vibrio vulnificus (strain CMCP6).